Consider the following 601-residue polypeptide: Glutathione-regulated potassium-efflux system protein KefB (601 aa).

13 helical membrane-spanning segments follow: residues 4-24 (ADLL…VPLA), 29-49 (IGAV…GLGF), 55-75 (EILH…GLEL), 87-107 (IFGV…GLLM), 111-131 (FLWQ…TAMA), 152-172 (VLLF…LLAG), 177-197 (HFDW…LIGG), 207-227 (FIAA…LVLS), 230-250 (LFMD…GVLL), 262-282 (AIDP…GMSL), 284-304 (LGVL…LVVI), 324-344 (MQFA…FSTA), and 356-376 (ALLL…MKGI). Positions 400-519 (KPQVIVVGFG…AGVTQFSRET (120 aa)) constitute an RCK N-terminal domain.

It belongs to the monovalent cation:proton antiporter 2 (CPA2) transporter (TC 2.A.37) family. KefB subfamily. As to quaternary structure, interacts with the regulatory subunit KefG.

Its subcellular location is the cell inner membrane. In terms of biological role, pore-forming subunit of a potassium efflux system that confers protection against electrophiles. Catalyzes K(+)/H(+) antiport. In Salmonella paratyphi B (strain ATCC BAA-1250 / SPB7), this protein is Glutathione-regulated potassium-efflux system protein KefB.